The primary structure comprises 72 residues: NADH dehydrogenase [ubiquinone] 1 beta subcomplex subunit 3-A (72 aa).

The chain crosses the membrane as a helical span at residues 31 to 48 (ALPGIGIGVGAFCVYLVG).

It belongs to the complex I NDUFB3 subunit family. Complex I is composed of at least 49 different subunits.

The protein localises to the mitochondrion inner membrane. Its function is as follows. Accessory subunit of the mitochondrial membrane respiratory chain NADH dehydrogenase (Complex I), that is believed not to be involved in catalysis. Complex I functions in the transfer of electrons from NADH to the respiratory chain. The immediate electron acceptor for the enzyme is believed to be ubiquinone. The chain is NADH dehydrogenase [ubiquinone] 1 beta subcomplex subunit 3-A from Arabidopsis thaliana (Mouse-ear cress).